Consider the following 464-residue polypeptide: tRNA-2-methylthio-N(6)-dimethylallyladenosine synthase (464 aa).

In terms of domain architecture, MTTase N-terminal spans 19–135 (GSYWITTFGC…LENLLERVDS (117 aa)). [4Fe-4S] cluster-binding residues include cysteine 28, cysteine 64, cysteine 98, cysteine 170, cysteine 174, and cysteine 177. In terms of domain architecture, Radical SAM core spans 156-393 (RDSTICGWVN…NELVEATSRK (238 aa)). The 69-residue stretch at 396–464 (QRYLNNTESV…SFSLSGQIYK (69 aa)) folds into the TRAM domain.

The protein belongs to the methylthiotransferase family. MiaB subfamily. As to quaternary structure, monomer. [4Fe-4S] cluster serves as cofactor.

Its subcellular location is the cytoplasm. It carries out the reaction N(6)-dimethylallyladenosine(37) in tRNA + (sulfur carrier)-SH + AH2 + 2 S-adenosyl-L-methionine = 2-methylsulfanyl-N(6)-dimethylallyladenosine(37) in tRNA + (sulfur carrier)-H + 5'-deoxyadenosine + L-methionine + A + S-adenosyl-L-homocysteine + 2 H(+). In terms of biological role, catalyzes the methylthiolation of N6-(dimethylallyl)adenosine (i(6)A), leading to the formation of 2-methylthio-N6-(dimethylallyl)adenosine (ms(2)i(6)A) at position 37 in tRNAs that read codons beginning with uridine. The chain is tRNA-2-methylthio-N(6)-dimethylallyladenosine synthase from Prochlorococcus marinus (strain MIT 9515).